Consider the following 445-residue polypeptide: Probable fructoselysine/psicoselysine transporter FrlA (445 aa).

A run of 12 helical transmembrane segments spans residues 10–30, 38–58, 93–113, 121–141, 155–175, 181–201, 236–256, 273–293, 334–354, 355–375, 389–410, and 417–435; these read LGFW…GIFV, AAGT…IVIP, GWAS…LAIV, PIDP…FMLL, LITI…IFWF, AAPT…LAGI, CLLV…LMPF, IPAL…IVIL, IILQ…TSLL, GYFT…IIWC, AFGL…STFV, and LICA…AFWA.

The protein belongs to the amino acid-polyamine-organocation (APC) superfamily.

The protein localises to the cell inner membrane. The catalysed reaction is N(6)-(D-fructosyl)-L-lysine(in) = N(6)-(D-fructosyl)-L-lysine(out). It carries out the reaction N(6)-(D-psicosyl)-L-lysine(in) = N(6)-(D-psicosyl)-L-lysine(out). Its pathway is carbohydrate metabolism; fructoselysine degradation. Its function is as follows. Is likely involved in the transport of fructoselysine and psicoselysine to the cytoplasm, where they are degraded. The polypeptide is Probable fructoselysine/psicoselysine transporter FrlA (Escherichia coli (strain K12)).